A 580-amino-acid polypeptide reads, in one-letter code: YTH domain-containing family protein 2 (580 aa).

Positions 1–45 are disordered; the sequence is MSASSLLEQRPKGQGNKVQNGSVHQKDGLNDDDFEPYLSPQARPN. The residue at position 2 (S2) is an N-acetylserine. Phosphoserine is present on residues S2, S4, S5, S22, S39, and S196. The tract at residues 2–385 is localization to mRNA processing bodies (P-bodies); the sequence is SASSLLEQRP…QAGSGSTPSE (384 aa). The disordered stretch occupies residues 247-388; sequence AKQQPKLKTK…SGSTPSEPHP (142 aa). A compositionally biased stretch (polar residues) spans 291–317; sequence ALVQNIGQQPTQGSPQPVGQQANNSPP. Positions 338–350 are enriched in low complexity; sequence AQLSVQQQAAQPT. At S360 the chain carries Phosphoserine. Residues 360 to 372 are compositionally biased toward gly residues; sequence SGFGHNGVDGNGV. The span at 373-384 shows a compositional bias: polar residues; it reads GQTQAGSGSTPS. The interaction with m6A-containing mRNAs stretch occupies residues 386-580; sequence PHPVLEKLRS…VKKERQGRGK (195 aa). The residue at position 395 (S395) is a Phosphoserine. The YTH domain maps to 411–545; sequence GRVFIIKSYS…EKAKQVLKII (135 aa). Residues 417–419, D423, 433–434, N463, W487, and W492 each bind RNA; these read KSY and WC.

This sequence belongs to the YTHDF family. YTHDF2 subfamily. In terms of assembly, interacts with CNOT1; interaction is direct and promotes recruitment of the CCR4-NOT complex. Interacts with YTHDF3. Interacts with RIDA/HRSP12; interaction leads to recruitment of the ribonuclease P/MRP complex. Ubiquitinated by the SCF(SKP2) complex, leading to its degradation.

The protein localises to the cytoplasm. It is found in the cytosol. It localises to the P-body. Its subcellular location is the stress granule. The protein resides in the nucleus. Specifically recognizes and binds N6-methyladenosine (m6A)-containing RNAs, and regulates their stability. M6A is a modification present at internal sites of mRNAs and some non-coding RNAs and plays a role in mRNA stability and processing. Acts as a regulator of mRNA stability by promoting degradation of m6A-containing mRNAs via interaction with the CCR4-NOT and ribonuclease P/MRP complexes, depending on the context. The YTHDF paralogs (YTHDF1, YTHDF2 and YTHDF3) share m6A-containing mRNAs targets and act redundantly to mediate mRNA degradation and cellular differentiation. M6A-containing mRNAs containing a binding site for RIDA/HRSP12 (5'-GGUUC-3') are preferentially degraded by endoribonucleolytic cleavage: cooperative binding of RIDA/HRSP12 and YTHDF2 to transcripts leads to recruitment of the ribonuclease P/MRP complex. Other m6A-containing mRNAs undergo deadenylation via direct interaction between YTHDF2 and CNOT1, leading to recruitment of the CCR4-NOT and subsequent deadenylation of m6A-containing mRNAs. Required maternally to regulate oocyte maturation: probably acts by binding to m6A-containing mRNAs, thereby regulating maternal transcript dosage during oocyte maturation, which is essential for the competence of oocytes to sustain early zygotic development. Also required during spermatogenesis: regulates spermagonial adhesion by promoting degradation of m6A-containing transcripts coding for matrix metallopeptidases. Also involved in hematopoietic stem cells specification by binding to m6A-containing mRNAs, leading to promote their degradation. Also acts as a regulator of neural development by promoting m6A-dependent degradation of neural development-related mRNA targets. Inhibits neural specification of induced pluripotent stem cells by binding to methylated neural-specific mRNAs and promoting their degradation, thereby restraining neural differentiation. Regulates circadian regulation of hepatic lipid metabolism: acts by promoting m6A-dependent degradation of PPARA transcripts. Regulates the innate immune response to infection by inhibiting the type I interferon response: acts by binding to m6A-containing IFNB transcripts and promoting their degradation. May also act as a promoter of cap-independent mRNA translation following heat shock stress: upon stress, relocalizes to the nucleus and specifically binds mRNAs with some m6A methylation mark at their 5'-UTR, protecting demethylation of mRNAs by FTO, thereby promoting cap-independent mRNA translation. Regulates mitotic entry by promoting the phase-specific m6A-dependent degradation of WEE1 transcripts. Promotes formation of phase-separated membraneless compartments, such as P-bodies or stress granules, by undergoing liquid-liquid phase separation upon binding to mRNAs containing multiple m6A-modified residues: polymethylated mRNAs act as a multivalent scaffold for the binding of YTHDF proteins, juxtaposing their disordered regions and thereby leading to phase separation. The resulting mRNA-YTHDF complexes then partition into different endogenous phase-separated membraneless compartments, such as P-bodies, stress granules or neuronal RNA granules. May also recognize and bind RNAs modified by C5-methylcytosine (m5C) and act as a regulator of rRNA processing. The protein is YTH domain-containing family protein 2 of Bos taurus (Bovine).